The following is a 243-amino-acid chain: Fibroblast growth factor 12 (243 aa).

Disordered stretches follow at residues 1-39 (MAAA…DGRS) and 216-243 (IGEK…QDST). The Bipartite nuclear localization signal signature appears at 11–38 (RQKRQARESNSDRVSASKRRSSPSKDGR).

This sequence belongs to the heparin-binding growth factors family. Interacts with the C-terminal region of SCN9A. In terms of tissue distribution, brain, eye and testis; highly expressed in embryonic retina, olfactory epithelium, olfactory bulb, and in a segmental pattern of the body wall; in adult olfactory bulb, less in cerebellum, deep cerebellar nuclei, cortex and multiple midbrain structures.

It is found in the nucleus. Its function is as follows. Involved in nervous system development and function. Involved in the positive regulation of voltage-gated sodium channel activity. Promotes neuronal excitability by elevating the voltage dependence of neuronal sodium channel SCN8A fast inactivation. The protein is Fibroblast growth factor 12 (FGF12) of Homo sapiens (Human).